Consider the following 272-residue polypeptide: MARLAAFDMDGTLLMPDHHLGEKTLSTLARLRERDITLTFATGRHALEMQHILGALSLDAYLITGNGTRVHSLEGELLHRDDLPADVAELVLYQQWDTRASMHIFNDDGWFTGKENPALLQAFVYSGFRYQIIDVKKMPLGSVTKICFCGDHDDLTRLQIQLYEALGERAHLCFSATDCLEVLPVGCNKGAVLTVLTQHLGLSLRDCMAFGDAMNDREMLGSVGSGFIMGNAMPQLRAELPHLPVIGHCRNQAVSHYLTHWLDYPHLPYSPE.

Asp-8 functions as the Nucleophile in the catalytic mechanism. Positions 8, 10, and 212 each coordinate Mg(2+).

The protein belongs to the HAD-like hydrolase superfamily. Cof family. Mg(2+) is required as a cofactor.

The enzyme catalyses 4-amino-2-methyl-5-(diphosphooxymethyl)pyrimidine + H2O = 4-amino-2-methyl-5-(phosphooxymethyl)pyrimidine + phosphate + H(+). Its function is as follows. Catalyzes the hydrolysis of 4-amino-2-methyl-5-hydroxymethylpyrimidine pyrophosphate (HMP-PP) to 4-amino-2-methyl-5-hydroxymethylpyrimidine phosphate (HMP-P). This chain is HMP-PP phosphatase, found in Escherichia coli O81 (strain ED1a).